A 346-amino-acid polypeptide reads, in one-letter code: NADH-ubiquinone oxidoreductase chain 2 (346 aa).

The next 10 helical transmembrane spans lie at 3 to 23 (PIIFTTILLTIMLGTNNVMIS), 25 to 45 (HWLLVWIGFEMNMLAIIPIMM), 67 to 87 (SMLLMMAVIINLMFSGQWTVM), 96 to 116 (MLMTMALAMKLGMAPFHFWVP), 122 to 142 (IPLSSGLILLTWQKLAPMSVL), 145 to 165 (IFPSINLNLILTLSILSILIG), 200 to 220 (TLLNLIIYITMTSTMFTMFMA), 238 to 258 (IMTILILATLLSMGGLPPLSG), 273 to 293 (NSIILPTFMAITALLNLYFYM), and 324 to 344 (FLPTMVVLSTMTLPLTPMLSV).

This sequence belongs to the complex I subunit 2 family. As to quaternary structure, core subunit of respiratory chain NADH dehydrogenase (Complex I) which is composed of 45 different subunits. Interacts with TMEM242.

It is found in the mitochondrion inner membrane. It catalyses the reaction a ubiquinone + NADH + 5 H(+)(in) = a ubiquinol + NAD(+) + 4 H(+)(out). Core subunit of the mitochondrial membrane respiratory chain NADH dehydrogenase (Complex I) which catalyzes electron transfer from NADH through the respiratory chain, using ubiquinone as an electron acceptor. Essential for the catalytic activity and assembly of complex I. The chain is NADH-ubiquinone oxidoreductase chain 2 from Bos mutus grunniens (Wild yak).